Reading from the N-terminus, the 296-residue chain is Vacuolar histidine transporter YPQ3 (296 aa).

Residues Met1–Asn12 lie on the Vacuolar side of the membrane. The PQ-loop 1 domain maps to Ala10–Leu76. The helical transmembrane segment at Leu13 to Ile33 threads the bilayer. The Cytoplasmic segment spans residues Tyr34–Gly44. The chain crosses the membrane as a helical span at residues Leu45–Met65. Residues Met66–Asn68 are Vacuolar-facing. The chain crosses the membrane as a helical span at residues Leu69–Ile89. Residues Gln90 to Asn163 lie on the Cytoplasmic side of the membrane. A helical transmembrane segment spans residues Phe164–Ile184. Residues Ser185 to Pro199 lie on the Vacuolar side of the membrane. The helical transmembrane segment at Ala200 to Leu220 threads the bilayer. A PQ-loop 2 domain is found at Ala208–Thr270. Over Gly221–Gly238 the chain is Cytoplasmic. The helical transmembrane segment at Val239 to Leu259 threads the bilayer. Residues Ser260–Ser262 lie on the Vacuolar side of the membrane. A helical transmembrane segment spans residues Trp263 to Leu283. Topologically, residues Tyr284–Asn296 are cytoplasmic.

This sequence belongs to the laat-1 family.

It is found in the vacuole membrane. It localises to the mitochondrion membrane. Its function is as follows. Amino acid transporter that moves histidine into the vacuole. May also contribute to low affinity arginine import into the vacuole. May function as an amino acid/proton antiporter. The chain is Vacuolar histidine transporter YPQ3 from Saccharomyces cerevisiae (strain ATCC 204508 / S288c) (Baker's yeast).